The sequence spans 2871 residues: Desmoplakin (2871 aa).

The segment at 1–584 is interaction with PKP1, JUP, PKP2; it reads MSCNGGSHPR…DYMKTIADLE (584 aa). Residues 1 to 1056 are globular 1; the sequence is MSCNGGSHPR…ANSENCNKNK (1056 aa). 2 positions are modified to phosphoserine: Ser22 and Ser53. At Tyr56 the chain carries Phosphotyrosine. Thr61 carries the post-translational modification Phosphothreonine. 3 positions are modified to phosphoserine: Ser165, Ser166, and Ser176. Spectrin repeat units lie at residues 178–271 and 272–375; these read SGWD…HLRQ and LQNI…LKEN. The stretch at 376–446 is one Spectrin 3a repeat; sequence AAYFQFFEEA…NLVNKSKKIV (71 aa). Positions 458 to 515 constitute an SH3 domain; that stretch reads NKPIILRALCDYKQDQKIVHKGDECILKDNNERSKWYVTGPGGVDMLVPSVGLIIPPP. The Spectrin 3b repeat unit spans residues 516 to 545; sequence NPLAVDLSCKIEQYYEAILALWNQLYINMK. 3 Spectrin repeats span residues 546–627, 654–769, and 770–883; these read SLVS…IQLP, VIET…SLCT, and VRAL…DLEK. A coiled-coil region spans residues 1018 to 1945; it reads SEMLKSLEDL…QREIDKLRQR (928 aa). Residues 1057–1945 form a central fibrous rod domain region; sequence FLDQNLQKYQ…QREIDKLRQR (889 aa). Residues Ser1658, Ser1708, and Ser2024 each carry the phosphoserine modification. Residues 1946 to 2871 form a globular 2 region; sequence PYGSHRETQT…YSFSSSSIGH (926 aa). Residues 1960–2208 are 4.5 X 38 AA tandem repeats (Domain A); sequence TVDTSKLVFD…LLLSVQKRSM (249 aa). Plectin repeat units follow at residues 2009-2045, 2046-2083, 2084-2121, 2122-2159, 2163-2197, 2198-2233, 2251-2288, 2289-2326, 2327-2364, 2365-2402, 2406-2440, 2456-2493, 2507-2544, 2610-2647, 2648-2685, 2724-2761, and 2762-2799; these read QPFL…PEST, VMLL…FDDR, QQIY…RETG, MRLL…RDLY, NDPR…PHTG, LLLL…PSTV, KDFL…PGTA, LELL…IEFK, EKLL…KGHG, IRLL…EELS, SDPS…EETG, SQKN…YETF, TITG…RKFF, SDTL…SITG, QRLL…QDMA, QRFL…GRAA, and QRLQ…DITG. Ser2207, Ser2209, and Ser2225 each carry phosphoserine. Residues 2244–2446 are 4.5 X 38 AA tandem repeats (Domain B); the sequence is DEVGERIKDF…EETGLCLLPL (203 aa). Residues 2609-2822 are 4.5 X 38 AA tandem repeats (Domain C); it reads FSDTLEESSP…LPSPYNMSSA (214 aa). Phosphoserine is present on residues Ser2810 and Ser2815. The segment covering 2810-2823 has biased composition (polar residues); sequence SKGLPSPYNMSSAP. Residues 2810–2871 are disordered; the sequence is SKGLPSPYNM…YSFSSSSIGH (62 aa). Position 2817 is a phosphotyrosine (Tyr2817). Residues Ser2820, Ser2821, and Ser2825 each carry the phosphoserine modification. A 6 X 4 AA tandem repeats of G-S-R-[SR] region spans residues 2824–2847; sequence GSRSGSRSGSRSGSRSGSRSGSRR. Low complexity predominate over residues 2824-2847; that stretch reads GSRSGSRSGSRSGSRSGSRSGSRR. Omega-N-methylarginine occurs at positions 2826 and 2847. Phosphoserine is present on Ser2849. A Phosphothreonine modification is found at Thr2853. Low complexity predominate over residues 2856 to 2871; the sequence is SSYSYSYSFSSSSIGH. Ser2868 bears the Phosphoserine mark.

Belongs to the plakin or cytolinker family. In terms of assembly, homodimer. Interacts with COL17A1 (via cytoplasmic region). Interacts with DSC2. Interacts with PKP2. Interacts with PKP1. Interacts weakly with TMEM65. Post-translationally, phosphorylation at Ser-2849 increases association with intermediate filament cytokeratin, potentially facilitating interaction between desmosome junctions and intermediate filament architecture. Expressed in oral mucosa (at protein level). Expressed in arrector pili muscle (at protein level). Expressed in the heart in the heart (at protein level). In terms of tissue distribution, apparently an obligate constituent of all desmosomes. As to expression, resides predominantly in tissues and cells of stratified origin.

The protein resides in the cell junction. The protein localises to the desmosome. It is found in the cell membrane. Its subcellular location is the cytoplasm. In terms of biological role, major high molecular weight protein of desmosomes. Regulates profibrotic gene expression in cardiomyocytes via activation of the MAPK14/p38 MAPK signaling cascade and increase in TGFB1 protein abundance. The chain is Desmoplakin (DSP) from Homo sapiens (Human).